Here is a 185-residue protein sequence, read N- to C-terminus: HTH-type transcriptional regulator SA2364 (185 aa).

The HTH tetR-type domain maps to 6 to 66 (KENRQRIEEI…YVIQRDLDIF (61 aa)). Positions 29–48 (SMNRIAKELGIGMGTLYRHF) form a DNA-binding region, H-T-H motif.

The sequence is that of HTH-type transcriptional regulator SA2364 from Staphylococcus aureus (strain N315).